A 233-amino-acid chain; its full sequence is Orotidine 5'-phosphate decarboxylase (233 aa).

Substrate is bound by residues aspartate 11, lysine 34, 61–70 (DLKLHDIPNT), threonine 117, arginine 179, glutamine 188, glycine 208, and arginine 209. The Proton donor role is filled by lysine 63.

It belongs to the OMP decarboxylase family. Type 1 subfamily. Homodimer.

The enzyme catalyses orotidine 5'-phosphate + H(+) = UMP + CO2. It participates in pyrimidine metabolism; UMP biosynthesis via de novo pathway; UMP from orotate: step 2/2. Functionally, catalyzes the decarboxylation of orotidine 5'-monophosphate (OMP) to uridine 5'-monophosphate (UMP). This Streptococcus pneumoniae (strain Hungary19A-6) protein is Orotidine 5'-phosphate decarboxylase.